The primary structure comprises 255 residues: Imidazole glycerol phosphate synthase subunit HisF (255 aa).

Active-site residues include aspartate 11 and aspartate 130.

Belongs to the HisA/HisF family. In terms of assembly, heterodimer of HisH and HisF.

Its subcellular location is the cytoplasm. It carries out the reaction 5-[(5-phospho-1-deoxy-D-ribulos-1-ylimino)methylamino]-1-(5-phospho-beta-D-ribosyl)imidazole-4-carboxamide + L-glutamine = D-erythro-1-(imidazol-4-yl)glycerol 3-phosphate + 5-amino-1-(5-phospho-beta-D-ribosyl)imidazole-4-carboxamide + L-glutamate + H(+). The protein operates within amino-acid biosynthesis; L-histidine biosynthesis; L-histidine from 5-phospho-alpha-D-ribose 1-diphosphate: step 5/9. IGPS catalyzes the conversion of PRFAR and glutamine to IGP, AICAR and glutamate. The HisF subunit catalyzes the cyclization activity that produces IGP and AICAR from PRFAR using the ammonia provided by the HisH subunit. The chain is Imidazole glycerol phosphate synthase subunit HisF from Rhodopseudomonas palustris (strain HaA2).